Here is a 304-residue protein sequence, read N- to C-terminus: Homoserine kinase (304 aa).

Position 92 to 102 (92 to 102 (PLARGLGSSAT)) interacts with ATP.

Belongs to the GHMP kinase family. Homoserine kinase subfamily.

It localises to the cytoplasm. The enzyme catalyses L-homoserine + ATP = O-phospho-L-homoserine + ADP + H(+). The protein operates within amino-acid biosynthesis; L-threonine biosynthesis; L-threonine from L-aspartate: step 4/5. Catalyzes the ATP-dependent phosphorylation of L-homoserine to L-homoserine phosphate. This is Homoserine kinase from Nostoc punctiforme (strain ATCC 29133 / PCC 73102).